The primary structure comprises 307 residues: Ribonuclease Z (307 aa).

Zn(2+) is bound by residues His-64, His-66, Asp-68, His-69, His-141, Asp-209, and His-267. Asp-68 (proton acceptor) is an active-site residue.

The protein belongs to the RNase Z family. Homodimer. Zn(2+) is required as a cofactor.

The catalysed reaction is Endonucleolytic cleavage of RNA, removing extra 3' nucleotides from tRNA precursor, generating 3' termini of tRNAs. A 3'-hydroxy group is left at the tRNA terminus and a 5'-phosphoryl group is left at the trailer molecule.. Functionally, zinc phosphodiesterase, which displays some tRNA 3'-processing endonuclease activity. Probably involved in tRNA maturation, by removing a 3'-trailer from precursor tRNA. The protein is Ribonuclease Z of Thermoplasma acidophilum (strain ATCC 25905 / DSM 1728 / JCM 9062 / NBRC 15155 / AMRC-C165).